A 431-amino-acid chain; its full sequence is uncharacterized protein (431 aa).

4Fe-4S ferredoxin-type domains follow at residues 336–367 and 362–391; these read VRPVHHPERCTDCAVCLAARRCPTHAIDNGLD and IDNGLDLDRCFGCGVCAWSCPSGAYEMDTG.

This is an uncharacterized protein from Methanothermobacter thermautotrophicus (strain ATCC 29096 / DSM 1053 / JCM 10044 / NBRC 100330 / Delta H) (Methanobacterium thermoautotrophicum).